The sequence spans 486 residues: Ribulose bisphosphate carboxylase large chain, plasmid (486 aa).

2 residues coordinate substrate: Asn126 and Thr176. Catalysis depends on Lys178, which acts as the Proton acceptor. Position 180 (Lys180) interacts with substrate. The Mg(2+) site is built by Lys204, Asp206, and Glu207. Lys204 is modified (N6-carboxylysine). The active-site Proton acceptor is His296. 3 residues coordinate substrate: Arg297, His329, and Ser381.

It belongs to the RuBisCO large chain family. Type I subfamily. In terms of assembly, heterohexadecamer of 8 large chains and 8 small chains. It depends on Mg(2+) as a cofactor.

The catalysed reaction is 2 (2R)-3-phosphoglycerate + 2 H(+) = D-ribulose 1,5-bisphosphate + CO2 + H2O. It catalyses the reaction D-ribulose 1,5-bisphosphate + O2 = 2-phosphoglycolate + (2R)-3-phosphoglycerate + 2 H(+). Functionally, ruBisCO catalyzes two reactions: the carboxylation of D-ribulose 1,5-bisphosphate, the primary event in carbon dioxide fixation, as well as the oxidative fragmentation of the pentose substrate. Both reactions occur simultaneously and in competition at the same active site. This Cupriavidus necator (strain ATCC 17699 / DSM 428 / KCTC 22496 / NCIMB 10442 / H16 / Stanier 337) (Ralstonia eutropha) protein is Ribulose bisphosphate carboxylase large chain, plasmid (cbbL2).